Here is a 453-residue protein sequence, read N- to C-terminus: Cytochrome b-c1 complex subunit 2, mitochondrial (453 aa).

A mitochondrion-targeting transit peptide spans M1–Y14. 3 positions are modified to N6-acetyllysine: K66, K199, and K250.

This sequence belongs to the peptidase M16 family. UQCRC2/QCR2 subfamily. In terms of assembly, component of the ubiquinol-cytochrome c oxidoreductase (cytochrome b-c1 complex, complex III, CIII), a multisubunit enzyme composed of 11 subunits. The complex is composed of 3 respiratory subunits cytochrome b, cytochrome c1 and Rieske protein UQCRFS1, 2 core protein subunits UQCRC1/QCR1 and UQCRC2/QCR2, and 6 low-molecular weight protein subunits UQCRH/QCR6, UQCRB/QCR7, UQCRQ/QCR8, UQCR10/QCR9, UQCR11/QCR10 and subunit 9, the cleavage product of Rieske protein UQCRFS1. The complex exists as an obligatory dimer and forms supercomplexes (SCs) in the inner mitochondrial membrane with NADH-ubiquinone oxidoreductase (complex I, CI) and cytochrome c oxidase (complex IV, CIV), resulting in different assemblies (supercomplex SCI(1)III(2)IV(1) and megacomplex MCI(2)III(2)IV(2)). Interacts with RAB5IF. Interacts with STMP1.

The protein resides in the mitochondrion inner membrane. Component of the ubiquinol-cytochrome c oxidoreductase, a multisubunit transmembrane complex that is part of the mitochondrial electron transport chain which drives oxidative phosphorylation. The respiratory chain contains 3 multisubunit complexes succinate dehydrogenase (complex II, CII), ubiquinol-cytochrome c oxidoreductase (cytochrome b-c1 complex, complex III, CIII) and cytochrome c oxidase (complex IV, CIV), that cooperate to transfer electrons derived from NADH and succinate to molecular oxygen, creating an electrochemical gradient over the inner membrane that drives transmembrane transport and the ATP synthase. The cytochrome b-c1 complex catalyzes electron transfer from ubiquinol to cytochrome c, linking this redox reaction to translocation of protons across the mitochondrial inner membrane, with protons being carried across the membrane as hydrogens on the quinol. In the process called Q cycle, 2 protons are consumed from the matrix, 4 protons are released into the intermembrane space and 2 electrons are passed to cytochrome c. The 2 core subunits UQCRC1/QCR1 and UQCRC2/QCR2 are homologous to the 2 mitochondrial-processing peptidase (MPP) subunits beta-MPP and alpha-MPP respectively, and they seem to have preserved their MPP processing properties. May be involved in the in situ processing of UQCRFS1 into the mature Rieske protein and its mitochondrial targeting sequence (MTS)/subunit 9 when incorporated into complex III. This Bos taurus (Bovine) protein is Cytochrome b-c1 complex subunit 2, mitochondrial (UQCRC2).